A 728-amino-acid chain; its full sequence is Catalase-peroxidase 1 (728 aa).

Residues W91–Y218 constitute a cross-link (tryptophyl-tyrosyl-methioninium (Trp-Tyr) (with M-244)). The active-site Proton acceptor is H92. The tryptophyl-tyrosyl-methioninium (Tyr-Met) (with W-91) cross-link spans Y218–M244. H259 is a heme b binding site.

Belongs to the peroxidase family. Peroxidase/catalase subfamily. As to quaternary structure, homodimer or homotetramer. Requires heme b as cofactor. In terms of processing, formation of the three residue Trp-Tyr-Met cross-link is important for the catalase, but not the peroxidase activity of the enzyme.

The enzyme catalyses H2O2 + AH2 = A + 2 H2O. It carries out the reaction 2 H2O2 = O2 + 2 H2O. Functionally, bifunctional enzyme with both catalase and broad-spectrum peroxidase activity. This Burkholderia cenocepacia (strain HI2424) protein is Catalase-peroxidase 1.